We begin with the raw amino-acid sequence, 275 residues long: 2,3,4,5-tetrahydropyridine-2,6-dicarboxylate N-succinyltransferase (275 aa).

The substrate site is built by Arg104 and Asp141.

This sequence belongs to the transferase hexapeptide repeat family. Homotrimer.

It localises to the cytoplasm. The enzyme catalyses (S)-2,3,4,5-tetrahydrodipicolinate + succinyl-CoA + H2O = (S)-2-succinylamino-6-oxoheptanedioate + CoA. The protein operates within amino-acid biosynthesis; L-lysine biosynthesis via DAP pathway; LL-2,6-diaminopimelate from (S)-tetrahydrodipicolinate (succinylase route): step 1/3. In Mannheimia succiniciproducens (strain KCTC 0769BP / MBEL55E), this protein is 2,3,4,5-tetrahydropyridine-2,6-dicarboxylate N-succinyltransferase.